Consider the following 519-residue polypeptide: O-fucosyltransferase 31 (519 aa).

Residues 18–38 traverse the membrane as a helical; Signal-anchor for type II membrane protein segment; that stretch reads ALAGVFVLLFPILYPNLFSPL. A glycan (N-linked (GlcNAc...) asparagine) is linked at Asn-131. 302-304 contributes to the substrate binding site; sequence HLR. 2 N-linked (GlcNAc...) asparagine glycosylation sites follow: Asn-373 and Asn-474.

This sequence belongs to the glycosyltransferase GT106 family.

It localises to the membrane. It functions in the pathway glycan metabolism. This Arabidopsis thaliana (Mouse-ear cress) protein is O-fucosyltransferase 31.